Consider the following 838-residue polypeptide: Rho GTPase-activating protein 12 (838 aa).

The SH3 domain occupies 10–72; it reads AGQAYIEVEY…PAQYVKEVTR (63 aa). Composition is skewed to polar residues over residues 155–172 and 189–198; these read GKFN…QNRT and TSFSQEQSCD. The tract at residues 155-239 is disordered; that stretch reads GKFNSDSHSP…PPNQGRPDSP (85 aa). Ser163 carries the phosphoserine modification. A phosphoserine mark is found at Ser199, Ser211, and Ser213. 2 positions are modified to phosphothreonine: Thr228 and Thr229. Residue Ser238 is modified to Phosphoserine. Tyr241 carries the phosphotyrosine modification. In terms of domain architecture, WW 1 spans 263 to 296; the sequence is IQVNGEWETHKDSSGRCYYYNRTTQERTWKPPRW. Basic and acidic residues predominate over residues 291-302; that stretch reads WKPPRWARDVST. The segment at 291 to 346 is disordered; the sequence is WKPPRWARDVSTSRDFQSPGEQEPLSSEENYHSSCFSQSDSQCGSPPRGWSEELDE. Over residues 303–334 the composition is skewed to polar residues; it reads SRDFQSPGEQEPLSSEENYHSSCFSQSDSQCG. One can recognise a WW 2 domain in the interval 355–388; that stretch reads DYTKEKWLKHVDDQGRQYYYSADGSRSEWELPKY. The disordered stretch occupies residues 425-456; that stretch reads DSNDKDSPTTTKLCLPENESPPTSSKHQDPGQ. Positions 466–567 constitute a PH domain; it reads KITENGKKVR…WFKVLSSTIN (102 aa). The span at 572-582 shows a compositional bias: acidic residues; it reads EADEAAEEETP. The segment at 572–620 is disordered; that stretch reads EADEAAEEETPDSPGVEKHDKEKDQKELKKLRSMKGSSMDSSEQKKTKK. Phosphoserine is present on Ser584. Over residues 586–601 the composition is skewed to basic and acidic residues; the sequence is GVEKHDKEKDQKELKK. A Rho-GAP domain is found at 648–836; that stretch reads SNLANLCQRE…LILLELSTVF (189 aa).

Functionally, GTPase activator for the Rho-type GTPases by converting them to an inactive GDP-bound state. The sequence is that of Rho GTPase-activating protein 12 (Arhgap12) from Mus musculus (Mouse).